The chain runs to 395 residues: S-adenosylmethionine synthase (395 aa).

H14 is an ATP binding site. D16 provides a ligand contact to Mg(2+). A K(+)-binding site is contributed by E42. Residues E55 and Q98 each coordinate L-methionine. The segment at 98–108 (QSPDIALGVDK) is flexible loop. ATP contacts are provided by residues 174–176 (DGK), 240–241 (RF), D249, 255–256 (RK), A272, and K276. D249 serves as a coordination point for L-methionine. Residue K280 participates in L-methionine binding.

The protein belongs to the AdoMet synthase family. As to quaternary structure, homotetramer; dimer of dimers. Mg(2+) serves as cofactor. K(+) is required as a cofactor.

The protein resides in the cytoplasm. It carries out the reaction L-methionine + ATP + H2O = S-adenosyl-L-methionine + phosphate + diphosphate. It functions in the pathway amino-acid biosynthesis; S-adenosyl-L-methionine biosynthesis; S-adenosyl-L-methionine from L-methionine: step 1/1. In terms of biological role, catalyzes the formation of S-adenosylmethionine (AdoMet) from methionine and ATP. The overall synthetic reaction is composed of two sequential steps, AdoMet formation and the subsequent tripolyphosphate hydrolysis which occurs prior to release of AdoMet from the enzyme. This chain is S-adenosylmethionine synthase, found in Thermotoga maritima (strain ATCC 43589 / DSM 3109 / JCM 10099 / NBRC 100826 / MSB8).